A 259-amino-acid polypeptide reads, in one-letter code: UPF0246 protein PputW619_0896 (259 aa).

Belongs to the UPF0246 family.

This chain is UPF0246 protein PputW619_0896, found in Pseudomonas putida (strain W619).